The sequence spans 137 residues: uncharacterized protein (137 aa).

Positions 1–15 are cleaved as a signal peptide; that stretch reads MKKLAIAGALLLLAG. Cysteine 16 carries N-palmitoyl cysteine lipidation. Residue cysteine 16 is the site of S-diacylglycerol cysteine attachment.

The protein localises to the cell membrane. This is an uncharacterized protein from Escherichia coli (strain K12).